A 1093-amino-acid chain; its full sequence is Leukemia inhibitory factor receptor (1093 aa).

An N-terminal signal peptide occupies residues 1-43; it reads MGAFSWWRQPSWMADNKRGRMTPSLPWLLSALTLLHLMMHVNG. Residues 44 to 829 lie on the Extracellular side of the membrane; that stretch reads LKRGVQQDLK…SMFVVTKENS (786 aa). The region spanning 45–127 is the Fibronectin type-III 1 domain; it reads KRGVQQDLKC…QSKFTLNEKD (83 aa). 2 disulfide bridges follow: cysteine 54/cysteine 64 and cysteine 81/cysteine 89. Asparagine 165, asparagine 200, asparagine 239, and asparagine 262 each carry an N-linked (GlcNAc...) asparagine glycan. Disulfide bonds link cysteine 209–cysteine 266 and cysteine 337–cysteine 347. 5 Fibronectin type-III domains span residues 331–428, 431–530, 534–625, 623–715, and 720–829; these read VPQK…ERVA, VPIS…TEAT, GPDT…IPND, PNDD…IGYI, and PIVA…KENS. 6 N-linked (GlcNAc...) asparagine glycosylation sites follow: asparagine 386, asparagine 403, asparagine 422, asparagine 441, asparagine 454, and asparagine 477. A disulfide bridge links cysteine 462 with cysteine 507. Positions 515 to 519 match the WSXWS motif motif; the sequence is WSKWS. Asparagine 568, asparagine 648, asparagine 659, asparagine 676, asparagine 725, and asparagine 783 each carry an N-linked (GlcNAc...) asparagine glycan. Residues 830–850 traverse the membrane as a helical segment; that stretch reads VGLIIAILIPVAVAVIVGVVT. Topologically, residues 851-1093 are cytoplasmic; that stretch reads SILCYRKREW…TNFFQNKPND (243 aa). The Box 1 motif signature appears at 865-873; that stretch reads FYPDIPNPE. 2 disordered regions span residues 908–941 and 1003–1093; these read ESRS…ENQA and LPIN…KPND. A phosphoserine mark is found at serine 923 and serine 1040. Composition is skewed to polar residues over residues 1028–1063 and 1082–1093; these read ANVN…NSRQ and SFTNFFQNKPND.

The protein belongs to the type I cytokine receptor family. Type 2 subfamily. Heterodimer composed of LIFR and IL6ST. The heterodimer formed by LIFR and IL6ST interacts with the complex formed by CNTF and CNTFR.

Its subcellular location is the cell membrane. Functionally, signal-transducing molecule. May have a common pathway with IL6ST. The soluble form inhibits the biological activity of LIF by blocking its binding to receptors on target cells. This Rattus norvegicus (Rat) protein is Leukemia inhibitory factor receptor (Lifr).